We begin with the raw amino-acid sequence, 244 residues long: Phosphoadenosine 5'-phosphosulfate reductase (244 aa).

C239 acts as the Nucleophile; cysteine thiosulfonate intermediate in catalysis.

Belongs to the PAPS reductase family. CysH subfamily.

The protein localises to the cytoplasm. The enzyme catalyses [thioredoxin]-disulfide + sulfite + adenosine 3',5'-bisphosphate + 2 H(+) = [thioredoxin]-dithiol + 3'-phosphoadenylyl sulfate. Its pathway is sulfur metabolism; hydrogen sulfide biosynthesis; sulfite from sulfate: step 3/3. Functionally, catalyzes the formation of sulfite from phosphoadenosine 5'-phosphosulfate (PAPS) using thioredoxin as an electron donor. The sequence is that of Phosphoadenosine 5'-phosphosulfate reductase from Escherichia coli O157:H7.